We begin with the raw amino-acid sequence, 221 residues long: Ras-related protein RABA5a (221 aa).

21–28 (GDSAVGKS) provides a ligand contact to GTP. Residues 43 to 51 (SKSTIGVEF) carry the Effector region motif. GTP is bound by residues 69–73 (DTAGQ), 127–130 (NKSD), and 157–158 (SA). 2 S-geranylgeranyl cysteine lipidation sites follow: cysteine 218 and cysteine 219.

Belongs to the small GTPase superfamily. Rab family.

The protein resides in the cell membrane. Intracellular vesicle trafficking and protein transport. The chain is Ras-related protein RABA5a (RABA5A) from Arabidopsis thaliana (Mouse-ear cress).